Reading from the N-terminus, the 88-residue chain is Small ribosomal subunit protein uS15 (88 aa).

It belongs to the universal ribosomal protein uS15 family. As to quaternary structure, part of the 30S ribosomal subunit. Forms a bridge to the 50S subunit in the 70S ribosome, contacting the 23S rRNA.

Functionally, one of the primary rRNA binding proteins, it binds directly to 16S rRNA where it helps nucleate assembly of the platform of the 30S subunit by binding and bridging several RNA helices of the 16S rRNA. Forms an intersubunit bridge (bridge B4) with the 23S rRNA of the 50S subunit in the ribosome. This chain is Small ribosomal subunit protein uS15, found in Borreliella afzelii (strain PKo) (Borrelia afzelii).